The sequence spans 311 residues: Nudix hydrolase 9 (311 aa).

Residues 131 to 298 (SSPLGNGAVI…GFALYELMLQ (168 aa)) form the Nudix hydrolase domain. The Nudix box motif lies at 192-213 (LNKKVTQEMFDSIICEVVEETG). Mg(2+)-binding residues include Glu207 and Glu211.

The protein belongs to the Nudix hydrolase family. The cofactor is Mg(2+). It depends on Mn(2+) as a cofactor. Expressed in roots, stems and leaves.

Functionally, probably mediates the hydrolysis of some nucleoside diphosphate derivatives. This chain is Nudix hydrolase 9 (NUDT9), found in Arabidopsis thaliana (Mouse-ear cress).